An 82-amino-acid chain; its full sequence is Acyl carrier protein (82 aa).

Positions 4–79 (EKIFQELKNI…DVVDIIESNL (76 aa)) constitute a Carrier domain. S39 carries the post-translational modification O-(pantetheine 4'-phosphoryl)serine.

The protein belongs to the acyl carrier protein (ACP) family. 4'-phosphopantetheine is transferred from CoA to a specific serine of apo-ACP by AcpS. This modification is essential for activity because fatty acids are bound in thioester linkage to the sulfhydryl of the prosthetic group.

It localises to the cytoplasm. It participates in lipid metabolism; fatty acid biosynthesis. Carrier of the growing fatty acid chain in fatty acid biosynthesis. The chain is Acyl carrier protein from Coprothermobacter proteolyticus (strain ATCC 35245 / DSM 5265 / OCM 4 / BT).